We begin with the raw amino-acid sequence, 297 residues long: Vacuolar protein sorting-associated protein 26C (297 aa).

Belongs to the VPS26 family. As to quaternary structure, component of the commander complex that is essential for endosomal recycling of transmembrane cargos; the commander complex is composed of the CCC subcomplex and the retriever subcomplex. Component of the heterotrimeric retriever complex consisting of VPS26C, VPS29 and VPS35L; within the complex interacts with VPS35L. Interacts with SNX17 (via C-terminus); the interaction is direct and associates SNX17 with the retriever complex. Interacts with SNX31; the interaction is direct.

The protein resides in the endosome. Functionally, component of the commander complex that is essential for endosomal recycling of transmembrane cargos; the commander complex is composed of the CCC subcomplex and the retriever subcomplex. Component of the retriever complex, which is a heterotrimeric complex related to retromer cargo-selective complex (CSC) and essential for retromer-independent retrieval and recycling of numerous cargos such as integrin alpha-5/beta-1 (ITGA5:ITGB1). The recruitment of the retriever complex to the endosomal membrane involves CCC and WASH complexes. In the endosomes, drives the retriever and recycling of NxxY-motif-containing cargo proteins by coupling to SNX17, a cargo essential for the homeostatic maintenance of numerous cell surface proteins associated with processes that include cell migration, cell adhesion, nutrient supply and cell signaling. The protein is Vacuolar protein sorting-associated protein 26C of Mus musculus (Mouse).